Reading from the N-terminus, the 232-residue chain is Clarin-1 (232 aa).

A helical transmembrane segment spans residues 8 to 28 (IIFCMAGVFSFACALGVVTAL). N48 carries an N-linked (GlcNAc...) asparagine glycan. The next 3 helical transmembrane spans lie at 101-121 (VILF…FFMY), 135-155 (LGLY…MILF), and 186-206 (TTSF…GLLI).

It belongs to the clarin family. In terms of tissue distribution, widely expressed. Found in the retina.

The protein resides in the cell membrane. May have a role in the excitatory ribbon synapse junctions between hair cells and cochlear ganglion cells and presumably also in analogous synapses within the retina. The sequence is that of Clarin-1 (CLRN1) from Homo sapiens (Human).